Reading from the N-terminus, the 312-residue chain is Ribosomal RNA small subunit methyltransferase H (312 aa).

Residues 34-36 (AGH), D54, F81, D102, and Q109 each bind S-adenosyl-L-methionine.

Belongs to the methyltransferase superfamily. RsmH family.

It localises to the cytoplasm. It catalyses the reaction cytidine(1402) in 16S rRNA + S-adenosyl-L-methionine = N(4)-methylcytidine(1402) in 16S rRNA + S-adenosyl-L-homocysteine + H(+). Specifically methylates the N4 position of cytidine in position 1402 (C1402) of 16S rRNA. This Citrifermentans bemidjiense (strain ATCC BAA-1014 / DSM 16622 / JCM 12645 / Bem) (Geobacter bemidjiensis) protein is Ribosomal RNA small subunit methyltransferase H.